We begin with the raw amino-acid sequence, 405 residues long: Cytochrome b (405 aa).

Residues 44-64 form a helical membrane-spanning segment; it reads FGSLAGIAMIIMIATGIFLAM. The heme b site is built by H94 and H108. 8 consecutive transmembrane segments (helical) span residues 97–117, 124–144, 163–183, 191–211, 245–265, 303–323, 338–358, and 368–388; these read GASM…YYGS, VLWW…FMGY, FSAI…GFSV, FFSL…LHMW, FGLG…PNFF, LGGV…PWLD, GFFW…AMPA, and LATI…GWFE. Residues H195 and H209 each coordinate heme b.

This sequence belongs to the cytochrome b family. In terms of assembly, the main subunits of complex b-c1 are: cytochrome b, cytochrome c1 and the Rieske protein. The cofactor is heme b.

Its subcellular location is the cell membrane. Functionally, component of the ubiquinol-cytochrome c reductase complex (complex III or cytochrome b-c1 complex), which is a respiratory chain that generates an electrochemical potential coupled to ATP synthesis. The protein is Cytochrome b (petB) of Rhodospirillum rubrum.